Reading from the N-terminus, the 146-residue chain is Cytochrome c oxidase assembly factor 1 homolog (146 aa).

Residues 1 to 14 (MMWQKYAGSRRSMP) lie on the Mitochondrial matrix side of the membrane. The helical transmembrane segment at 15 to 37 (LGARILFHGVFYAGGFAIVYYLI) threads the bilayer. Residues 38 to 146 (QKFHSRALYY…GENGDEVKKE (109 aa)) are Mitochondrial intermembrane-facing.

This sequence belongs to the COA1 family. In terms of assembly, component of the MITRAC (mitochondrial translation regulation assembly intermediate of cytochrome c oxidase complex) complex, the core components of this complex being COA3/MITRAC12 and COX14. Interacts with COX17 and COA6. Part of the mitochondrial complex I assembly/MCIA complex that comprises at least the core subunits TMEM126B, NDUFAF1, ECSIT and ACAD9 and complement subunits such as COA1 and TMEM186.

It is found in the mitochondrion inner membrane. Component of the MITRAC (mitochondrial translation regulation assembly intermediate of cytochrome c oxidase complex) complex, that regulates cytochrome c oxidase assembly. MITRAC complexes regulate both translation of mitochondrial encoded components and assembly of nuclear-encoded components imported in mitochondrion. Required for assembly of mitochondrial respiratory chain complex I and complex IV. As part of the MCIA complex, required for efficient assembly of the mitochondrial complex I. This Homo sapiens (Human) protein is Cytochrome c oxidase assembly factor 1 homolog.